Reading from the N-terminus, the 217-residue chain is Casparian strip membrane protein 6 (217 aa).

Residues 1 to 57 lie on the Cytoplasmic side of the membrane; that stretch reads MEEAKHIEAVEAKQIEAEEAQRIKAGEAKQIEAGETSRSSRKVITFEPKLVINKGIS. The helical transmembrane segment at 58–78 threads the bilayer; sequence VLGFVLRLFAVFGTIGSALAM. Over 79–103 the chain is Extracellular; it reads GTTHESVVSLSQLVLLKVKYSDLPT. Residues 104–124 traverse the membrane as a helical segment; sequence LMFFVVANAIAGGYLVLSLPV. At 125-138 the chain is on the cytoplasmic side; that stretch reads SIFHIFSTKAKTSR. The helical transmembrane segment at 139–159 threads the bilayer; that stretch reads IILLVIDTVMLALVSSGASAA. The Extracellular segment spans residues 160 to 191; sequence TATVYLAHEGNTTANWPPICQQFDGFCERISG. Asn-170 is a glycosylation site (N-linked (GlcNAc...) asparagine). The helical transmembrane segment at 192-212 threads the bilayer; it reads SLIGSFCAVILLMLIVINSAI. At 213–217 the chain is on the cytoplasmic side; sequence SLSRH.

It belongs to the Casparian strip membrane proteins (CASP) family. In terms of assembly, homodimer and heterodimers.

It is found in the cell membrane. Its function is as follows. Regulates membrane-cell wall junctions and localized cell wall deposition. Required for establishment of the Casparian strip membrane domain (CSD) and the subsequent formation of Casparian strips, a cell wall modification of the root endodermis that determines an apoplastic barrier between the intraorganismal apoplasm and the extraorganismal apoplasm and prevents lateral diffusion. This chain is Casparian strip membrane protein 6, found in Arabidopsis lyrata subsp. lyrata (Lyre-leaved rock-cress).